A 198-amino-acid chain; its full sequence is Thymidine kinase (198 aa).

ATP is bound by residues 9-16 (STMNAGKS) and 87-90 (DEAQ). The Proton acceptor role is filled by Glu-88. Zn(2+)-binding residues include Cys-145, Cys-147, Cys-182, and His-185.

This sequence belongs to the thymidine kinase family. As to quaternary structure, homotetramer.

Its subcellular location is the cytoplasm. It carries out the reaction thymidine + ATP = dTMP + ADP + H(+). The chain is Thymidine kinase from Ruegeria pomeroyi (strain ATCC 700808 / DSM 15171 / DSS-3) (Silicibacter pomeroyi).